Reading from the N-terminus, the 229-residue chain is 2-C-methyl-D-erythritol 4-phosphate cytidylyltransferase (229 aa).

It belongs to the IspD/TarI cytidylyltransferase family. IspD subfamily.

It carries out the reaction 2-C-methyl-D-erythritol 4-phosphate + CTP + H(+) = 4-CDP-2-C-methyl-D-erythritol + diphosphate. It functions in the pathway isoprenoid biosynthesis; isopentenyl diphosphate biosynthesis via DXP pathway; isopentenyl diphosphate from 1-deoxy-D-xylulose 5-phosphate: step 2/6. In terms of biological role, catalyzes the formation of 4-diphosphocytidyl-2-C-methyl-D-erythritol from CTP and 2-C-methyl-D-erythritol 4-phosphate (MEP). The chain is 2-C-methyl-D-erythritol 4-phosphate cytidylyltransferase from Neisseria meningitidis serogroup B (strain ATCC BAA-335 / MC58).